Here is a 100-residue protein sequence, read N- to C-terminus: UPF0213 protein YhbQ (100 aa).

Positions 2-77 (TPWFLYLIRT…KQLTKRQKER (76 aa)) constitute a GIY-YIG domain.

It belongs to the UPF0213 family.

In Escherichia coli O1:K1 / APEC, this protein is UPF0213 protein YhbQ.